We begin with the raw amino-acid sequence, 691 residues long: Putative calcium up-regulated protein I (691 aa).

One can recognise a Ricin B-type lectin domain in the interval 47–174 (SNCYLKEKPQ…NYTSQIWTYN (128 aa)).

The protein belongs to the cup family.

In Dictyostelium discoideum (Social amoeba), this protein is Putative calcium up-regulated protein I (cupI).